An 861-amino-acid chain; its full sequence is Putative glutamate--cysteine ligase 2-2 (861 aa).

The segment at 1–372 (MSDARIVAVG…RDVPPAGAAA (372 aa)) is carboxylate-amine ligase. The unknown stretch occupies residues 373 to 861 (ALGSAPAVSA…GSKDTWIPRR (489 aa)).

It in the N-terminal section; belongs to the glutamate--cysteine ligase type 2 family. YbdK subfamily.

The catalysed reaction is L-cysteine + L-glutamate + ATP = gamma-L-glutamyl-L-cysteine + ADP + phosphate + H(+). Functionally, ATP-dependent carboxylate-amine ligase which exhibits weak glutamate--cysteine ligase activity. The protein is Putative glutamate--cysteine ligase 2-2 of Frankia casuarinae (strain DSM 45818 / CECT 9043 / HFP020203 / CcI3).